The sequence spans 201 residues: dTTP/UTP pyrophosphatase (201 aa).

The Proton acceptor role is filled by Asp-73.

Belongs to the Maf family. YhdE subfamily. A divalent metal cation serves as cofactor.

It localises to the cytoplasm. It carries out the reaction dTTP + H2O = dTMP + diphosphate + H(+). The catalysed reaction is UTP + H2O = UMP + diphosphate + H(+). In terms of biological role, nucleoside triphosphate pyrophosphatase that hydrolyzes dTTP and UTP. May have a dual role in cell division arrest and in preventing the incorporation of modified nucleotides into cellular nucleic acids. The sequence is that of dTTP/UTP pyrophosphatase from Pseudomonas aeruginosa (strain ATCC 15692 / DSM 22644 / CIP 104116 / JCM 14847 / LMG 12228 / 1C / PRS 101 / PAO1).